The sequence spans 353 residues: UDP-3-O-acylglucosamine N-acyltransferase (353 aa).

His-258 (proton acceptor) is an active-site residue.

It belongs to the transferase hexapeptide repeat family. LpxD subfamily. Homotrimer.

It carries out the reaction a UDP-3-O-[(3R)-3-hydroxyacyl]-alpha-D-glucosamine + a (3R)-hydroxyacyl-[ACP] = a UDP-2-N,3-O-bis[(3R)-3-hydroxyacyl]-alpha-D-glucosamine + holo-[ACP] + H(+). The protein operates within bacterial outer membrane biogenesis; LPS lipid A biosynthesis. Functionally, catalyzes the N-acylation of UDP-3-O-acylglucosamine using 3-hydroxyacyl-ACP as the acyl donor. Is involved in the biosynthesis of lipid A, a phosphorylated glycolipid that anchors the lipopolysaccharide to the outer membrane of the cell. The chain is UDP-3-O-acylglucosamine N-acyltransferase from Parvibaculum lavamentivorans (strain DS-1 / DSM 13023 / NCIMB 13966).